The primary structure comprises 391 residues: Phosphoglycerate kinase (391 aa).

Residues D21–N23, R36, H59–R62, R113, and R146 each bind substrate. ATP-binding positions include K197, E319, and G345–T348.

The protein belongs to the phosphoglycerate kinase family. In terms of assembly, monomer.

The protein resides in the cytoplasm. The enzyme catalyses (2R)-3-phosphoglycerate + ATP = (2R)-3-phospho-glyceroyl phosphate + ADP. It participates in carbohydrate degradation; glycolysis; pyruvate from D-glyceraldehyde 3-phosphate: step 2/5. This Shewanella woodyi (strain ATCC 51908 / MS32) protein is Phosphoglycerate kinase.